A 762-amino-acid polypeptide reads, in one-letter code: ABC-type oligopeptide transporter ABCB9 (762 aa).

8 helical membrane passes run 7 to 27 (VVVT…IYAF), 47 to 67 (VLDL…ATIG), 84 to 104 (LVIT…LLLF), 116 to 136 (FWAL…LWGL), 181 to 201 (VAFL…ETFL), 221 to 241 (FTTA…AAGI), 315 to 335 (VFMF…FPII), and 412 to 432 (SGLT…HLVI). The 284-residue stretch at 184–467 (LVAASFFLIV…VGSVYSGLMQ (284 aa)) folds into the ABC transmembrane type-1 domain. Residues 500–736 (VDFENVTFTY…GGLYAKLVQR (237 aa)) form the ABC transporter domain. 535–542 (GPSGSGKS) contributes to the ATP binding site.

It belongs to the ABC transporter superfamily. ABCB family. MHC peptide exporter (TC 3.A.1.209) subfamily. As to quaternary structure, homodimer. Interacts (via TMD0 region) with LAMP1; this interaction strongly stabilizes ABCB9 and protects ABCB9 against lysosomal degradation. Interacts (via TMD0 region) with LAMP2 (isoform LAMP-2B). Interacts (via TMD0) with YIF1B; this interaction allows (but is not essential) the ER-to-Golgi trafficking and strongly depends on a salt bridge within TMD0. Highly expressed in testis, particularly in the Sertoli cells of the seminiferous tubules, and at moderate levels in brain and spinal cord.

It localises to the lysosome membrane. It carries out the reaction a [oligopeptide](in) + ATP + H2O = a [oligopeptide](out) + ADP + phosphate + H(+). ATP-dependent low-affinity peptide transporter which translocates a broad spectrum of peptides from the cytosol to the lysosomal lumen for degradation. Displays a broad peptide length specificity from 6-mer up to at least 59-mer peptides with an optimum of 23-mers. Binds and transports smaller and larger peptides with the same affinity. Favors positively charged, aromatic or hydrophobic residues in the N- and C-terminal positions whereas negatively charged residues as well as asparagine and methionine are not favored. The polypeptide is ABC-type oligopeptide transporter ABCB9 (Mus musculus (Mouse)).